The primary structure comprises 166 residues: uncharacterized protein (166 aa).

The next 4 helical transmembrane spans lie at 7–27, 30–50, 69–89, and 92–112; these read VLFK…SLFY, FLFA…YCYI, IETL…KSLL, and NSFF…LVLF.

It to M.jannaschii MJ0795.1 and MJ0785.1.

The protein resides in the cell membrane. This is an uncharacterized protein from Methanocaldococcus jannaschii (strain ATCC 43067 / DSM 2661 / JAL-1 / JCM 10045 / NBRC 100440) (Methanococcus jannaschii).